The sequence spans 202 residues: Imidazoleglycerol-phosphate dehydratase (202 aa).

Belongs to the imidazoleglycerol-phosphate dehydratase family.

Its subcellular location is the cytoplasm. The catalysed reaction is D-erythro-1-(imidazol-4-yl)glycerol 3-phosphate = 3-(imidazol-4-yl)-2-oxopropyl phosphate + H2O. Its pathway is amino-acid biosynthesis; L-histidine biosynthesis; L-histidine from 5-phospho-alpha-D-ribose 1-diphosphate: step 6/9. The sequence is that of Imidazoleglycerol-phosphate dehydratase from Rhizobium leguminosarum bv. trifolii (strain WSM2304).